The chain runs to 174 residues: Ribosome maturation factor RimM (174 aa).

The 74-residue stretch at 98 to 171 folds into the PRC barrel domain; that stretch reads EDEYYFHEII…TIKIHIMEGL (74 aa).

This sequence belongs to the RimM family. Binds ribosomal protein uS19.

The protein localises to the cytoplasm. Its function is as follows. An accessory protein needed during the final step in the assembly of 30S ribosomal subunit, possibly for assembly of the head region. Essential for efficient processing of 16S rRNA. May be needed both before and after RbfA during the maturation of 16S rRNA. It has affinity for free ribosomal 30S subunits but not for 70S ribosomes. The polypeptide is Ribosome maturation factor RimM (Bacillus licheniformis (strain ATCC 14580 / DSM 13 / JCM 2505 / CCUG 7422 / NBRC 12200 / NCIMB 9375 / NCTC 10341 / NRRL NRS-1264 / Gibson 46)).